A 20-amino-acid polypeptide reads, in one-letter code: Alpha-1B-glycoprotein (20 aa).

The segment at 1 to 20 is disordered; that stretch reads AVVFDPQPALWAEADTQLEP.

As to quaternary structure, interacts with CRISP3. In terms of processing, glycosylated. Plasma.

It is found in the secreted. This is Alpha-1B-glycoprotein (A1BG) from Equus asinus (Donkey).